A 222-amino-acid chain; its full sequence is Protein ORM1 (222 aa).

The disordered stretch occupies residues 1-57 (MTELDYQGTAEAASTSYSRNQTDLKPFPSAGSASSSIKTTEPVKDHRRRRSSSIISH). At 1–85 (MTELDYQGTA…NATWVDQRGA (85 aa)) the chain is on the cytoplasmic side. The segment covering 12-23 (AASTSYSRNQTD) has biased composition (polar residues). 3 positions are modified to phosphoserine: serine 29, serine 32, and serine 56. Residues 86-106 (WIIHVVIIILLKLFYNLFPGV) form a helical membrane-spanning segment. At 107-109 (TTE) the chain is on the extracellular side. The helical transmembrane segment at 110–130 (WSWTLTNMTYVIGSYVMFHLI) threads the bilayer. Residues 131-162 (KGTPFDFNGGAYDNLTMWEQIDDETLYTPSRK) lie on the Cytoplasmic side of the membrane. The helical transmembrane segment at 163 to 183 (FLISVPIALFLVSTHYAHYDL) threads the bilayer. Lysine 184 is a topological domain (extracellular). The chain crosses the membrane as a helical span at residues 185–205 (LFSWNCFLTTFGAVVPKLPVT). Over 206–222 (HRLRISIPGITGRAQIS) the chain is Cytoplasmic.

This sequence belongs to the ORM family. In terms of assembly, component of the SPOTS complex, at least composed of LCB1/2 (LCB1 and/or LCB2), ORM1/2 (ORM1 and/or ORM2), SAC1 and TSC3. Post-translationally, phosphorylated in case of disruption of sphingolipid synthesis. Phosphorylation regulates inhibitory activity of serine palmitoyltransferases (LCB1 and LCB2).

It is found in the endoplasmic reticulum membrane. Functionally, component of the SPOTS complex that acts as a negative regulator of sphingolipid synthesis. Acts by inhibiting serine palmitoyltransferases (LCB1 and LCB2) activity. Along with ORM2, plays a role in the phosphorylation of LAC1 and YPK1, the distribution of actin patches between mother and daughter cells, and in endocytosis. Disruption or inhibition of sphingolipid synthesis leads to the activation and phosphorylation of YPK1 through the TORC2 and PKH1 pathways, which in turn phosphorylates ORM1 and LAG1 to activate sphingolipid synthesis. The polypeptide is Protein ORM1 (ORM1) (Saccharomyces cerevisiae (strain ATCC 204508 / S288c) (Baker's yeast)).